The following is a 702-amino-acid chain: Phosphatase and actin regulator 4 (702 aa).

Disordered stretches follow at residues 1–38 (MEDPFEEADQPATEPGMVMDSVEAGDTTPPTKRKSKFS), 82–194 (GVLL…SSGG), and 222–363 (NLSV…PFPA). The stretch at 63–88 (EVLERKISMRKPREELVKRGVLLEDP) is one RPEL 1 repeat. Residues 106–120 (GHTTPIGNARSSSPV) are compositionally biased toward polar residues. Phosphoserine is present on residues serine 116, serine 118, serine 131, and serine 147. A compositionally biased stretch (polar residues) spans 147–156 (STGSQPNSEA). Residues 163-173 (VPKPPLLPPKR) are compositionally biased toward pro residues. A compositionally biased stretch (low complexity) spans 233–250 (TLPAAPASTNTTATPSLT). 2 positions are modified to phosphoserine: serine 270 and serine 291. Residues 301–318 (PSTSVPTLESAAAITTKT) show a composition bias toward polar residues. Phosphoserine occurs at positions 342 and 344. Residues 342–362 (SPSPPLPTHIPPEPPRTPPFP) show a composition bias toward pro residues. The residue at position 358 (threonine 358) is a Phosphothreonine. Serine 427 is modified (phosphoserine). At threonine 432 the chain carries Phosphothreonine. Residues serine 443, serine 453, and serine 464 each carry the phosphoserine modification. The segment at 473–536 (KVPDDEEEEE…EEDEDESYQS (64 aa)) is disordered. Residues 486–497 (PSTFSEETTPTS) show a composition bias toward low complexity. The span at 508 to 518 (EEEEKESDSDS) shows a compositional bias: acidic residues. Serine 514, serine 516, serine 557, and serine 590 each carry phosphoserine. RPEL repeat units lie at residues 583–608 (NTLIRRLSQRPTPEELEQRNILQPKN) and 621–646 (RRLTRKLSQRPTVAELLARKILRFNE). A disordered region spans residues 592 to 615 (RPTPEELEQRNILQPKNEADRQAE). Position 628 is a phosphoserine (serine 628).

Belongs to the phosphatase and actin regulator family. In terms of assembly, binds PPP1CA and actin.

Its subcellular location is the cytoplasm. The protein localises to the cell projection. It localises to the lamellipodium. Its function is as follows. Regulator of protein phosphatase 1 (PP1) required for neural tube and optic fissure closure, and enteric neural crest cell (ENCCs) migration during development. Acts as an activator of PP1 by interacting with PPP1CA and preventing phosphorylation of PPP1CA at 'Thr-320'. During neural tube closure, localizes to the ventral neural tube and activates PP1, leading to down-regulate cell proliferation within cranial neural tissue and the neural retina. Also acts as a regulator of migration of enteric neural crest cells (ENCCs) by activating PP1, leading to dephosphorylation and subsequent activation of cofilin (COF1 or COF2) and repression of the integrin signaling through the RHO/ROCK pathway. The chain is Phosphatase and actin regulator 4 (PHACTR4) from Pongo abelii (Sumatran orangutan).